The primary structure comprises 146 residues: Transcriptional regulator AdcR (146 aa).

Positions 1–143 constitute an HTH marR-type domain; that stretch reads MRQLAKDINA…IQRFLTALVG (143 aa). The Zn(2+) site is built by E24, C30, E41, and H42. Residues 54–77 constitute a DNA-binding region (H-T-H motif); it reads NSELARRLNVSQAAVTKAIKSLVK. Zn(2+)-binding residues include E107, H108, and H112.

As to quaternary structure, homodimer.

With respect to regulation, zinc acts as a coregulator and is required for DNA-binding activity. Its function is as follows. Zinc-responsive regulator that acts both as a repressor and as an activator by regulating directly the promoters of its target genes. In the presence of zinc, directly represses the expression of the adcRCBA operon, of genes coding for a group of surface antigen zinc-binding pneumococcal histidine triad proteins (PhtA, PhtB, PhtD and PhtE), and of adcAII. Can also activate expression of adh. The protein is Transcriptional regulator AdcR (adcR) of Streptococcus pneumoniae serotype 2 (strain D39 / NCTC 7466).